The primary structure comprises 248 residues: Ubiquinone/menaquinone biosynthesis C-methyltransferase UbiE (248 aa).

2 residues coordinate S-adenosyl-L-methionine: Ser-68 and Asp-92.

Belongs to the class I-like SAM-binding methyltransferase superfamily. MenG/UbiE family.

It catalyses the reaction a 2-demethylmenaquinol + S-adenosyl-L-methionine = a menaquinol + S-adenosyl-L-homocysteine + H(+). The enzyme catalyses a 2-methoxy-6-(all-trans-polyprenyl)benzene-1,4-diol + S-adenosyl-L-methionine = a 5-methoxy-2-methyl-3-(all-trans-polyprenyl)benzene-1,4-diol + S-adenosyl-L-homocysteine + H(+). It functions in the pathway quinol/quinone metabolism; menaquinone biosynthesis; menaquinol from 1,4-dihydroxy-2-naphthoate: step 2/2. Its pathway is cofactor biosynthesis; ubiquinone biosynthesis. In terms of biological role, methyltransferase required for the conversion of demethylmenaquinol (DMKH2) to menaquinol (MKH2) and the conversion of 2-polyprenyl-6-methoxy-1,4-benzoquinol (DDMQH2) to 2-polyprenyl-3-methyl-6-methoxy-1,4-benzoquinol (DMQH2). The protein is Ubiquinone/menaquinone biosynthesis C-methyltransferase UbiE of Rickettsia rickettsii (strain Iowa).